An 81-amino-acid polypeptide reads, in one-letter code: U17-lycotoxin-Ls1a (81 aa).

Residues 1–22 (MSSKVQAVLLLVGVITFLAVHA) form the signal peptide. Positions 23–34 (QEELSENTESER) are excised as a propeptide. 3 cysteine pairs are disulfide-bonded: C36/C51, C50/C67, and C58/C65.

It belongs to the neurotoxin 02 (plectoxin) family. Expressed by the venom gland.

The protein localises to the secreted. The chain is U17-lycotoxin-Ls1a from Lycosa singoriensis (Wolf spider).